We begin with the raw amino-acid sequence, 370 residues long: UDP-N-acetylglucosamine--N-acetylmuramyl-(pentapeptide) pyrophosphoryl-undecaprenol N-acetylglucosamine transferase (370 aa).

UDP-N-acetyl-alpha-D-glucosamine-binding positions include 15-17 (TGG), Asn-129, Arg-171, Ser-200, Ile-256, and Gln-301.

It belongs to the glycosyltransferase 28 family. MurG subfamily.

The protein resides in the cell membrane. The catalysed reaction is di-trans,octa-cis-undecaprenyl diphospho-N-acetyl-alpha-D-muramoyl-L-alanyl-D-glutamyl-meso-2,6-diaminopimeloyl-D-alanyl-D-alanine + UDP-N-acetyl-alpha-D-glucosamine = di-trans,octa-cis-undecaprenyl diphospho-[N-acetyl-alpha-D-glucosaminyl-(1-&gt;4)]-N-acetyl-alpha-D-muramoyl-L-alanyl-D-glutamyl-meso-2,6-diaminopimeloyl-D-alanyl-D-alanine + UDP + H(+). It functions in the pathway cell wall biogenesis; peptidoglycan biosynthesis. Functionally, cell wall formation. Catalyzes the transfer of a GlcNAc subunit on undecaprenyl-pyrophosphoryl-MurNAc-pentapeptide (lipid intermediate I) to form undecaprenyl-pyrophosphoryl-MurNAc-(pentapeptide)GlcNAc (lipid intermediate II). The protein is UDP-N-acetylglucosamine--N-acetylmuramyl-(pentapeptide) pyrophosphoryl-undecaprenol N-acetylglucosamine transferase of Caldicellulosiruptor saccharolyticus (strain ATCC 43494 / DSM 8903 / Tp8T 6331).